The chain runs to 363 residues: Apelin receptor B (363 aa).

The Extracellular segment spans residues 1–38 (MESEGFSATTEQYEYYDYANETGLQPCDETDWDFSYSL). The N-linked (GlcNAc...) asparagine glycan is linked to N20. Intrachain disulfides connect C27-C287 and C109-C186. The helical transmembrane segment at 39–59 (LPVFYMIVFVLGLSGNGVVIF) threads the bilayer. Over 60 to 77 (TVWKAKPKRRSADTYIGN) the chain is Cytoplasmic. Residues 78–98 (LALADLAFVVTLPLWATYTAL) traverse the membrane as a helical segment. At 99–111 (GFHWPFGSALCKL) the chain is on the extracellular side. Residues 112-132 (SSYLVLLNMFASVFCLTCLSF) form a helical membrane-spanning segment. Topologically, residues 133–152 (DRYLAIVHSLSSAKLRSRSS) are cytoplasmic. A helical transmembrane segment spans residues 153 to 173 (ILVSLAVIWLFSGLLALPSLI). At 174-200 (LRDTRVEGNNTICDLDFSGVSSKENEN) the chain is on the extracellular side. N-linked (GlcNAc...) asparagine glycosylation occurs at N182. Residues 201 to 221 (FWIGGLSILTTVPGFLLPLLL) form a helical membrane-spanning segment. Residues 222–249 (MTIFYCFIGGKVTMHFQNLKKEEQKKKR) lie on the Cytoplasmic side of the membrane. Residues 250 to 270 (LLKIIITLVVVFAICWLPFHI) traverse the membrane as a helical segment. The Extracellular portion of the chain corresponds to 271 to 297 (LKTIHFLDLMGFLELSCSAQNIIVSLH). A helical membrane pass occupies residues 298-318 (PYATCLAYVNSCLNPFLYAFF). Residues 319–363 (DLRFRSQCFFFFGFKKVLQGHLSNTSSSLSAQTQKSEIHSLATKV) are Cytoplasmic-facing.

The protein belongs to the G-protein coupled receptor 1 family. Expressed in all blood vessels including the posterior cardinal vein, intersomitic veins and the vitelline vein network.

The protein resides in the cell membrane. Functionally, g protein-coupled receptor for peptide hormones apelin (apln) and apelin receptor early endogenous ligand (apela), that plays a role in the regulation of normal cardiovascular function and fluid homeostasis. When acting as apelin receptor, activates both G(i) protein pathway that inhibits adenylate cyclase activity, and the beta-arrestin pathway that promotes internalization of the receptor. Also functions as mechanoreceptor that is activated by pathological stimuli in a G-protein-independent fashion to induce beta-arrestin signaling, hence eliciting cardiac hypertrophy. However, the presence of apelin ligand blunts cardiac hypertrophic induction from APLNR/APJ on response to pathological stimuli. Plays a key role in early development such as gastrulation, blood vessels formation and heart morphogenesis by acting as a receptor for apela hormone, promoting endoderm and mesendoderm cell migration and regulating the migration of cells fated to become myocardial progenitors, respectively. Promotes angioblast migration toward the embryonic midline, i.e. the position of the future vessel formation, during vasculogenesis. May promote sinus venosus (SV)-derived endothelial cells migration into the developing heart to promote coronary blood vessel development. Required for cardiovascular development, particularly for intersomitic vein angiogenesis by acting as a receptor for apln hormone. Also plays a role in various processes in adults such as regulation of blood vessel formation, blood pressure, heart contractility, and heart failure. Acts upstream of the i/o type of G-alpha proteins in the differentiation of endothelium, erythroid cells, myeloid cells and cardiomyocytes. In Xenopus laevis (African clawed frog), this protein is Apelin receptor B (aplnr-b).